A 292-amino-acid polypeptide reads, in one-letter code: Phosphatidylglycerol--prolipoprotein diacylglyceryl transferase (292 aa).

The next 4 helical transmembrane spans lie at 7–27, 45–65, 83–103, and 116–136; these read IILS…FLRE, FQLR…YVLA, LFWG…IFNW, and IWHG…MIFI. Arg-165 serves as a coordination point for a 1,2-diacyl-sn-glycero-3-phospho-(1'-sn-glycerol). The next 2 helical transmembrane spans lie at 204 to 224 and 264 to 284; these read PTFL…YFFV and AAQV…AYII.

Belongs to the Lgt family.

It is found in the cell inner membrane. The catalysed reaction is L-cysteinyl-[prolipoprotein] + a 1,2-diacyl-sn-glycero-3-phospho-(1'-sn-glycerol) = an S-1,2-diacyl-sn-glyceryl-L-cysteinyl-[prolipoprotein] + sn-glycerol 1-phosphate + H(+). It functions in the pathway protein modification; lipoprotein biosynthesis (diacylglyceryl transfer). Functionally, catalyzes the transfer of the diacylglyceryl group from phosphatidylglycerol to the sulfhydryl group of the N-terminal cysteine of a prolipoprotein, the first step in the formation of mature lipoproteins. This is Phosphatidylglycerol--prolipoprotein diacylglyceryl transferase from Fervidobacterium nodosum (strain ATCC 35602 / DSM 5306 / Rt17-B1).